Consider the following 380-residue polypeptide: Probable inactive dehydrogenase easA (380 aa).

FMN-binding positions include 25 to 27 (PMT), alanine 60, glutamine 102, and histidine 171. Residues histidine 171 and asparagine 174 each contribute to the substrate site. Residues lysine 223, glycine 299, 324–325 (GR), and arginine 325 each bind FMN. Tyrosine 352 is a binding site for substrate.

This sequence belongs to the NADH:flavin oxidoreductase/NADH oxidase family.

Functionally, probable inactive dehydrogenase; part of the gene cluster that mediates the biosynthesis of fungal ergot alkaloid. DmaW catalyzes the first step of ergot alkaloid biosynthesis by condensing dimethylallyl diphosphate (DMAP) and tryptophan to form 4-dimethylallyl-L-tryptophan. The second step is catalyzed by the methyltransferase easF that methylates 4-dimethylallyl-L-tryptophan in the presence of S-adenosyl-L-methionine, resulting in the formation of 4-dimethylallyl-L-abrine. The catalase easC and the FAD-dependent oxidoreductase easE then transform 4-dimethylallyl-L-abrine to chanoclavine-I which is further oxidized by easD in the presence of NAD(+), resulting in the formation of chanoclavine-I aldehyde. Agroclavine dehydrogenase easG then mediates the conversion of chanoclavine-I aldehyde to agroclavine via a non-enzymatic adduct reaction: the substrate is an iminium intermediate that is formed spontaneously from chanoclavine-I aldehyde in the presence of glutathione. The presence of easA is not required to complete this reaction. Further conversion of agroclavine to paspalic acid is a two-step process involving oxidation of agroclavine to elymoclavine and of elymoclavine to paspalic acid, the second step being performed by the elymoclavine oxidase cloA. Paspalic acid is then further converted to D-lysergic acid. Ergopeptines are assembled from D-lysergic acid and three different amino acids by the D-lysergyl-peptide-synthetases composed each of a monomudular and a trimodular nonribosomal peptide synthetase subunit. LpsB and lpsC encode the monomodular subunits responsible for D-lysergic acid activation and incorporation into the ergopeptine backbone. LpsA1 and A2 subunits encode the trimodular nonribosomal peptide synthetase assembling the tripeptide portion of ergopeptines. LpsA1 is responsible for formation of the major ergopeptine, ergotamine, and lpsA2 for alpha-ergocryptine, the minor ergopeptine of the total alkaloid mixture elaborated by C.purpurea. D-lysergyl-tripeptides are assembled by the nonribosomal peptide synthetases and released as N-(D-lysergyl-aminoacyl)-lactams. Cyclolization of the D-lysergyl-tripeptides is performed by the Fe(2+)/2-ketoglutarate-dependent dioxygenase easH which introduces a hydroxyl group into N-(D-lysergyl-aminoacyl)-lactam at alpha-C of the aminoacyl residue followed by spontaneous condensation with the terminal lactam carbonyl group. This Claviceps purpurea (Ergot fungus) protein is Probable inactive dehydrogenase easA.